Here is a 99-residue protein sequence, read N- to C-terminus: Nucleoid-associated protein SSA_0326 (99 aa).

Residues 1-15 (MMNMQSMMKQAQKLQ) show a composition bias toward low complexity. The interval 1–23 (MMNMQSMMKQAQKLQKQMEKGQA) is disordered.

This sequence belongs to the YbaB/EbfC family. Homodimer.

The protein localises to the cytoplasm. It is found in the nucleoid. Functionally, binds to DNA and alters its conformation. May be involved in regulation of gene expression, nucleoid organization and DNA protection. In Streptococcus sanguinis (strain SK36), this protein is Nucleoid-associated protein SSA_0326.